The primary structure comprises 249 residues: Mediator of RNA polymerase II transcription subunit 8 (249 aa).

Residues 1 to 26 are a coiled coil; it reads MQREEKQLDMLLEAVLNRLNDLKHSI. Polar residues-rich tracts occupy residues 215–224 and 235–249; these read SPMSAVSPSG and IKTN…HPYR. The tract at residues 215-249 is disordered; sequence SPMSAVSPSGNAPMGKMPSGIKTNIKSANQVHPYR.

This sequence belongs to the Mediator complex subunit 8 family. As to quaternary structure, component of the Mediator complex.

Its subcellular location is the nucleus. In terms of biological role, component of the Mediator complex, a coactivator involved in the regulated transcription of nearly all RNA polymerase II-dependent genes. Mediator functions as a bridge to convey information from gene-specific regulatory proteins to the basal RNA polymerase II transcription machinery. Mediator is recruited to promoters by direct interactions with regulatory proteins and serves as a scaffold for the assembly of a functional preinitiation complex with RNA polymerase II and the general transcription factors. This is Mediator of RNA polymerase II transcription subunit 8 (MED8) from Anopheles gambiae (African malaria mosquito).